The chain runs to 152 residues: Transcriptional regulator MraZ (152 aa).

SpoVT-AbrB domains follow at residues 5–52 (VTSI…PLHE) and 81–124 (ATEC…QDKQ).

Belongs to the MraZ family. As to quaternary structure, forms oligomers.

It localises to the cytoplasm. The protein resides in the nucleoid. The protein is Transcriptional regulator MraZ of Actinobacillus pleuropneumoniae serotype 5b (strain L20).